A 498-amino-acid polypeptide reads, in one-letter code: ATP synthase subunit beta, chloroplastic (498 aa).

An ATP-binding site is contributed by 172–179 (GGAGVGKT).

This sequence belongs to the ATPase alpha/beta chains family. As to quaternary structure, F-type ATPases have 2 components, CF(1) - the catalytic core - and CF(0) - the membrane proton channel. CF(1) has five subunits: alpha(3), beta(3), gamma(1), delta(1), epsilon(1). CF(0) has four main subunits: a(1), b(1), b'(1) and c(9-12).

It localises to the plastid. The protein resides in the chloroplast thylakoid membrane. It carries out the reaction ATP + H2O + 4 H(+)(in) = ADP + phosphate + 5 H(+)(out). Produces ATP from ADP in the presence of a proton gradient across the membrane. The catalytic sites are hosted primarily by the beta subunits. This is ATP synthase subunit beta, chloroplastic from Saccharum hybrid (Sugarcane).